We begin with the raw amino-acid sequence, 113 residues long: Putative pterin-4-alpha-carbinolamine dehydratase (113 aa).

Belongs to the pterin-4-alpha-carbinolamine dehydratase family.

It carries out the reaction (4aS,6R)-4a-hydroxy-L-erythro-5,6,7,8-tetrahydrobiopterin = (6R)-L-erythro-6,7-dihydrobiopterin + H2O. This Legionella pneumophila (strain Paris) protein is Putative pterin-4-alpha-carbinolamine dehydratase.